The following is an 88-amino-acid chain: UPF0297 protein Bcer98_3100 (88 aa).

Belongs to the UPF0297 family.

The sequence is that of UPF0297 protein Bcer98_3100 from Bacillus cytotoxicus (strain DSM 22905 / CIP 110041 / 391-98 / NVH 391-98).